The sequence spans 574 residues: Mitochondrial distribution and morphology protein 34 (574 aa).

Residues 1-195 (MAFNFNWSPL…LPAIIHRLSL (195 aa)) enclose the SMP-LTD domain. Disordered regions lie at residues 210–233 (RESP…KDPV), 301–403 (EGAA…TPPT), and 479–515 (SADG…ESNA). Low complexity-rich tracts occupy residues 212–224 (SPAA…GEDP), 302–314 (GAAS…GSPV), and 323–334 (SSPLSSLQDASS). A compositionally biased stretch (polar residues) spans 335–345 (VLSLQNRSTTP). Positions 346 to 359 (GSSFSGYGLSLGAG) are enriched in low complexity. Residues 360-373 (RHSKTRPTRKRKKR) are compositionally biased toward basic residues. Positions 374–385 (VVDLRKHNKPAD) are enriched in basic and acidic residues. Positions 393-403 (STFTESTTPPT) are enriched in low complexity. Positions 484–493 (KTSSQQQPIS) are enriched in polar residues.

Belongs to the MDM34 family. In terms of assembly, component of the ER-mitochondria encounter structure (ERMES) or MDM complex, composed of MMM1, MDM10, MDM12 and MDM34.

It is found in the mitochondrion outer membrane. Component of the ERMES/MDM complex, which serves as a molecular tether to connect the endoplasmic reticulum (ER) and mitochondria. Components of this complex are involved in the control of mitochondrial shape and protein biogenesis, and function in nonvesicular lipid trafficking between the ER and mitochondria. MDM34 is required for the interaction of the ER-resident membrane protein MMM1 and the outer mitochondrial membrane-resident beta-barrel protein MDM10. The protein is Mitochondrial distribution and morphology protein 34 of Coccidioides immitis (strain RS) (Valley fever fungus).